The sequence spans 335 residues: Protein-arginine N-acetylglucosaminyltransferase SseK3 (335 aa).

UDP-N-acetyl-alpha-D-glucosamine is bound by residues 51 to 53 and Tyr-75; that span reads QWF. N-beta-linked (GlcNAc) arginine; by autocatalysis glycans are attached at residues Arg-153 and Arg-184. 224 to 227 serves as a coordination point for UDP-N-acetyl-alpha-D-glucosamine; sequence YLDA. Positions 226 to 228 match the DXD motif motif; the sequence is DAD. Position 228 (Asp-228) interacts with Mn(2+). The Proton acceptor role is filled by Glu-258. Residue Arg-305 is glycosylated (N-beta-linked (GlcNAc) arginine; by autocatalysis). 2 residues coordinate Mn(2+): Asp-325 and Ser-327. Residues Ser-327 and 332 to 335 contribute to the UDP-N-acetyl-alpha-D-glucosamine site; that span reads SSWR. A glycan (N-beta-linked (GlcNAc) arginine; by autocatalysis) is linked at Arg-335.

Belongs to the glycosyltransferase NleB family. In terms of assembly, interacts with host TRIM32; without mediating its GlcNAcylation. It depends on Mn(2+) as a cofactor. Post-translationally, auto-glycosylated: arginine GlcNAcylation is required for activity toward death domain-containing host target proteins.

The protein resides in the secreted. The protein localises to the host Golgi apparatus. The catalysed reaction is L-arginyl-[protein] + UDP-N-acetyl-alpha-D-glucosamine = N(omega)-(N-acetyl-beta-D-glucosaminyl)-L-arginyl-[protein] + UDP + H(+). Protein-arginine N-acetylglucosaminyltransferase effector that disrupts TNF signaling in infected cells, including NF-kappa-B signaling and apoptosis. Acts by catalyzing the transfer of a single N-acetylglucosamine (GlcNAc) to a conserved arginine residue in the death domain of host proteins such as TRADD, TNFRSF1A/TNFR1 and TNFRSF10B/TRAILR2: arginine GlcNAcylation prevents homotypic/heterotypic death domain interactions and assembly of the oligomeric TNF-alpha receptor complex, thereby disrupting TNF signaling. Also acts on host proteins without a death domain: catalyzes arginine GlcNAcylation of host small Rab GTPase (Rab1, Rab5 and Rab11), thereby preventing GTPase activity and leading to impaired host vesicular protein transport. Also mediates auto-GlcNAcylation, which is required for activity toward death domain-containing host target proteins. The chain is Protein-arginine N-acetylglucosaminyltransferase SseK3 from Salmonella typhimurium (strain SL1344).